A 245-amino-acid polypeptide reads, in one-letter code: 3-deoxy-manno-octulosonate cytidylyltransferase (245 aa).

The protein belongs to the KdsB family.

The protein localises to the cytoplasm. The enzyme catalyses 3-deoxy-alpha-D-manno-oct-2-ulosonate + CTP = CMP-3-deoxy-beta-D-manno-octulosonate + diphosphate. Its pathway is nucleotide-sugar biosynthesis; CMP-3-deoxy-D-manno-octulosonate biosynthesis; CMP-3-deoxy-D-manno-octulosonate from 3-deoxy-D-manno-octulosonate and CTP: step 1/1. It functions in the pathway bacterial outer membrane biogenesis; lipopolysaccharide biosynthesis. In terms of biological role, activates KDO (a required 8-carbon sugar) for incorporation into bacterial lipopolysaccharide in Gram-negative bacteria. The chain is 3-deoxy-manno-octulosonate cytidylyltransferase from Rhodopseudomonas palustris (strain BisB5).